Reading from the N-terminus, the 258-residue chain is Putative phosphoenolpyruvate synthase regulatory protein (258 aa).

Residue 146 to 153 coordinates ADP; that stretch reads GVSRVGKT.

This sequence belongs to the pyruvate, phosphate/water dikinase regulatory protein family. PSRP subfamily.

It carries out the reaction [pyruvate, water dikinase] + ADP = [pyruvate, water dikinase]-phosphate + AMP + H(+). The catalysed reaction is [pyruvate, water dikinase]-phosphate + phosphate + H(+) = [pyruvate, water dikinase] + diphosphate. Bifunctional serine/threonine kinase and phosphorylase involved in the regulation of the phosphoenolpyruvate synthase (PEPS) by catalyzing its phosphorylation/dephosphorylation. The protein is Putative phosphoenolpyruvate synthase regulatory protein of Thiobacillus denitrificans (strain ATCC 25259 / T1).